A 290-amino-acid chain; its full sequence is Agmatinase (290 aa).

Residues H112, D135, H137, D139, D216, and D218 each contribute to the Mn(2+) site.

This sequence belongs to the arginase family. Agmatinase subfamily. It depends on Mn(2+) as a cofactor.

The enzyme catalyses agmatine + H2O = urea + putrescine. The protein operates within amine and polyamine biosynthesis; putrescine biosynthesis via agmatine pathway; putrescine from agmatine: step 1/1. Functionally, catalyzes the formation of putrescine from agmatine. The polypeptide is Agmatinase (speB) (Bacillus anthracis).